The following is a 167-amino-acid chain: Translation initiation factor IF-3 (167 aa).

It belongs to the IF-3 family. Monomer.

The protein localises to the cytoplasm. IF-3 binds to the 30S ribosomal subunit and shifts the equilibrium between 70S ribosomes and their 50S and 30S subunits in favor of the free subunits, thus enhancing the availability of 30S subunits on which protein synthesis initiation begins. In Bacillus cereus (strain ATCC 14579 / DSM 31 / CCUG 7414 / JCM 2152 / NBRC 15305 / NCIMB 9373 / NCTC 2599 / NRRL B-3711), this protein is Translation initiation factor IF-3.